The chain runs to 30 residues: Dermaseptin-3.4TR (30 aa).

As to expression, expressed by the skin glands.

The protein localises to the secreted. In terms of biological role, has antimicrobial activity. The polypeptide is Dermaseptin-3.4TR (Phyllomedusa trinitatis (Trinidad leaf frog)).